Here is a 1324-residue protein sequence, read N- to C-terminus: Synaptojanin-1 (1324 aa).

An SAC domain is found at Val-119–Gly-442. The catalytic stretch occupies residues Ala-475–His-859. Phosphoserine occurs at positions 820 and 830. In terms of domain architecture, RRM spans Ser-902 to Pro-971. Positions Leu-1030–Asn-1324 are disordered. The segment covering Ala-1080–Leu-1103 has biased composition (polar residues). Residues Pro-1108–Ser-1130 are compositionally biased toward pro residues. Over residues Ala-1138–Asn-1156 the composition is skewed to basic and acidic residues. Arg-1186 bears the Omega-N-methylarginine mark. At Thr-1205 the chain carries Phosphothreonine. Ser-1277 carries the post-translational modification Phosphoserine. Low complexity predominate over residues Ser-1278 to Ala-1292.

It belongs to the synaptojanin family. This sequence in the central section; belongs to the inositol 1,4,5-trisphosphate 5-phosphatase family. Interacts with ASH/GRB2. Interacts with PACSIN1, PACSIN2 and PACSIN3. Interacts with AMPH, SH3GL1, SH3GL2 and SH3GL3. Interacts with MYO1E (via SH3 domain). Interacts with BIN1 and DNM1. Interacts with EPS15. In terms of tissue distribution, ubiquitously expressed with highest levels in brain.

Its subcellular location is the cytoplasm. The protein localises to the perinuclear region. It catalyses the reaction a 1,2-diacyl-sn-glycero-3-phospho-(1D-myo-inositol-4,5-bisphosphate) + H2O = a 1,2-diacyl-sn-glycero-3-phospho-(1D-myo-inositol 4-phosphate) + phosphate. In terms of biological role, phosphatase that acts on various phosphoinositides, including phosphatidylinositol 4-phosphate, phosphatidylinositol (4,5)-bisphosphate and phosphatidylinositol (3,4,5)-trisphosphate. Has a role in clathrin-mediated endocytosis. Hydrolyzes PIP2 bound to actin regulatory proteins resulting in the rearrangement of actin filaments downstream of tyrosine kinase and ASH/GRB2. The sequence is that of Synaptojanin-1 (SYNJ1) from Bos taurus (Bovine).